The following is a 366-amino-acid chain: Mitochondrial division protein fszB (366 aa).

GTP is bound by residues 70–74 (GGGGN), 157–159 (GTG), Glu-190, and Asp-238.

Belongs to the FtsZ family.

Its subcellular location is the mitochondrion. Functionally, probably involved in mitochondrion division process. Binds to and hydrolyzes GTP. The protein is Mitochondrial division protein fszB (fszB) of Dictyostelium discoideum (Social amoeba).